Here is a 23-residue protein sequence, read N- to C-terminus: GLKDIFKAGLGSLVKGIAAHVAN.

Position 23 is an asparagine amide (Asn23).

As to expression, expressed by the skin glands.

The protein localises to the secreted. It is found in the target cell membrane. Its function is as follows. Antibacterial peptide with amphipathic alpha-helical structure. Shows selective growth inhibitory activity against the Gram-negative bacteria E.coli (MIC=25 uM) Has a weak hemolytic activity against human erythrocytes (LC(50)&gt;100 uM). Is very weakly active against S.aureus (MIC=200 uM). The protein is Alyteserin-1a of Alytes obstetricans (Common midwife toad).